A 302-amino-acid chain; its full sequence is Sulfate adenylyltransferase subunit 2 (302 aa).

This sequence belongs to the PAPS reductase family. CysD subfamily. In terms of assembly, heterodimer composed of CysD, the smaller subunit, and CysN.

It catalyses the reaction sulfate + ATP + H(+) = adenosine 5'-phosphosulfate + diphosphate. The protein operates within sulfur metabolism; hydrogen sulfide biosynthesis; sulfite from sulfate: step 1/3. Functionally, with CysN forms the ATP sulfurylase (ATPS) that catalyzes the adenylation of sulfate producing adenosine 5'-phosphosulfate (APS) and diphosphate, the first enzymatic step in sulfur assimilation pathway. APS synthesis involves the formation of a high-energy phosphoric-sulfuric acid anhydride bond driven by GTP hydrolysis by CysN coupled to ATP hydrolysis by CysD. This chain is Sulfate adenylyltransferase subunit 2, found in Shigella dysenteriae serotype 1 (strain Sd197).